A 523-amino-acid polypeptide reads, in one-letter code: GMP synthase [glutamine-hydrolyzing] (523 aa).

Residues 8–205 (KILILDFGSQ…VVNICGCETK (198 aa)) form the Glutamine amidotransferase type-1 domain. Cys85 acts as the Nucleophile in catalysis. Active-site residues include His179 and Glu181. In terms of domain architecture, GMPS ATP-PPase spans 206–398 (WTAENIIEDA…LGLPAEMINR (193 aa)). 233-239 (SGGVDSS) provides a ligand contact to ATP.

As to quaternary structure, homodimer.

It carries out the reaction XMP + L-glutamine + ATP + H2O = GMP + L-glutamate + AMP + diphosphate + 2 H(+). The protein operates within purine metabolism; GMP biosynthesis; GMP from XMP (L-Gln route): step 1/1. In terms of biological role, catalyzes the synthesis of GMP from XMP. The sequence is that of GMP synthase [glutamine-hydrolyzing] from Haemophilus influenzae (strain PittEE).